The primary structure comprises 235 residues: tRNA (guanine-N(1)-)-methyltransferase (235 aa).

Residues Gly-113 and 133–138 (IGDYIL) contribute to the S-adenosyl-L-methionine site.

The protein belongs to the RNA methyltransferase TrmD family. In terms of assembly, homodimer.

The protein resides in the cytoplasm. It catalyses the reaction guanosine(37) in tRNA + S-adenosyl-L-methionine = N(1)-methylguanosine(37) in tRNA + S-adenosyl-L-homocysteine + H(+). In terms of biological role, specifically methylates guanosine-37 in various tRNAs. In Wolbachia sp. subsp. Brugia malayi (strain TRS), this protein is tRNA (guanine-N(1)-)-methyltransferase.